Here is a 229-residue protein sequence, read N- to C-terminus: Cytidylate kinase (229 aa).

An ATP-binding site is contributed by 12 to 20 (GPSGSGKGT).

This sequence belongs to the cytidylate kinase family. Type 1 subfamily.

It localises to the cytoplasm. The catalysed reaction is CMP + ATP = CDP + ADP. It carries out the reaction dCMP + ATP = dCDP + ADP. The protein is Cytidylate kinase of Pseudomonas syringae pv. tomato (strain ATCC BAA-871 / DC3000).